A 417-amino-acid chain; its full sequence is Phosphoglycerate kinase 2 (417 aa).

The residue at position 2 (Ser-2) is an N-acetylserine. Phosphoserine is present on residues Ser-2 and Ser-4. Lys-11 is modified (N6-acetyllysine). (2R)-3-phosphoglycerate is bound by residues Val-23, Asp-24, Phe-25, Asn-26, Gln-38, Arg-39, Ser-62, His-63, Gly-65, and Arg-66. 3 positions are modified to N6-acetyllysine: Lys-75, Lys-86, and Lys-97. (2R)-3-phosphoglycerate contacts are provided by Leu-122 and Arg-123. Residues Lys-131 and Lys-146 each carry the N6-acetyllysine modification. Positions 170 and 171 each coordinate (2R)-3-phosphoglycerate. Tyr-196 bears the Phosphotyrosine mark. The residue at position 199 (Lys-199) is an N6-acetyllysine. Residue Gly-214 participates in ADP binding. Position 214 (Gly-214) interacts with CDP. Residues Ala-215 and Lys-216 each coordinate AMP. Position 215 (Ala-215) interacts with ATP. Ala-215 provides a ligand contact to Mg(2+). Mg(2+)-binding residues include Ala-218 and Asp-219. Asp-219 provides a ligand contact to CDP. Lys-220 is an AMP binding site. Residue Lys-220 participates in ATP binding. Residue Gly-238 participates in ADP binding. Gly-238 lines the CDP pocket. Gly-239 provides a ligand contact to AMP. Gly-239 is an ATP binding site. An N6-acetyllysine mark is found at Lys-267 and Lys-291. Ala-313 is an AMP binding site. Ala-313 is an ATP binding site. Residues Gly-338 and Phe-343 each contribute to the CDP site. Phe-343 provides a ligand contact to ADP. Glu-344 serves as a coordination point for AMP. Residues Glu-344, Asp-375, and Thr-376 each contribute to the ATP site. Residue Asp-375 coordinates Mg(2+).

The protein belongs to the phosphoglycerate kinase family. Monomer. Requires Mg(2+) as cofactor. As to expression, testis specific.

It localises to the cytoplasm. It carries out the reaction (2R)-3-phosphoglycerate + ATP = (2R)-3-phospho-glyceroyl phosphate + ADP. The protein operates within carbohydrate degradation; glycolysis; pyruvate from D-glyceraldehyde 3-phosphate: step 2/5. Its function is as follows. Essential for sperm motility and male fertility but is not required for the completion of spermatogenesis. The chain is Phosphoglycerate kinase 2 from Sus scrofa (Pig).